Reading from the N-terminus, the 367-residue chain is Chorismate synthase (367 aa).

Position 48 (arginine 48) interacts with NADP(+). Residues 125 to 127 (RSS), glycine 284, 299 to 303 (KPTPS), and arginine 325 contribute to the FMN site.

Belongs to the chorismate synthase family. As to quaternary structure, homotetramer. It depends on FMNH2 as a cofactor.

The enzyme catalyses 5-O-(1-carboxyvinyl)-3-phosphoshikimate = chorismate + phosphate. It participates in metabolic intermediate biosynthesis; chorismate biosynthesis; chorismate from D-erythrose 4-phosphate and phosphoenolpyruvate: step 7/7. Its function is as follows. Catalyzes the anti-1,4-elimination of the C-3 phosphate and the C-6 proR hydrogen from 5-enolpyruvylshikimate-3-phosphate (EPSP) to yield chorismate, which is the branch point compound that serves as the starting substrate for the three terminal pathways of aromatic amino acid biosynthesis. This reaction introduces a second double bond into the aromatic ring system. The chain is Chorismate synthase from Lachnoclostridium phytofermentans (strain ATCC 700394 / DSM 18823 / ISDg) (Clostridium phytofermentans).